We begin with the raw amino-acid sequence, 29 residues long: Cytochrome b6-f complex subunit 8 (29 aa).

Residues 3–23 form a helical membrane-spanning segment; sequence ITSIAWGALMVVFTFSLSLVV.

Belongs to the PetN family. In terms of assembly, the 4 large subunits of the cytochrome b6-f complex are cytochrome b6, subunit IV (17 kDa polypeptide, PetD), cytochrome f and the Rieske protein, while the 4 small subunits are PetG, PetL, PetM and PetN. The complex functions as a dimer.

Its subcellular location is the plastid membrane. In terms of biological role, component of the cytochrome b6-f complex, which mediates electron transfer between photosystem II (PSII) and photosystem I (PSI), cyclic electron flow around PSI, and state transitions. The chain is Cytochrome b6-f complex subunit 8 from Aneura mirabilis (Parasitic liverwort).